A 176-amino-acid chain; its full sequence is Large ribosomal subunit protein uL6 (176 aa).

The segment covering 151 to 170 (RPPEPYKGKGVRYADEQVRR) has biased composition (basic and acidic residues). Residues 151–176 (RPPEPYKGKGVRYADEQVRRKEAKKK) form a disordered region.

The protein belongs to the universal ribosomal protein uL6 family. Part of the 50S ribosomal subunit.

In terms of biological role, this protein binds to the 23S rRNA, and is important in its secondary structure. It is located near the subunit interface in the base of the L7/L12 stalk, and near the tRNA binding site of the peptidyltransferase center. This is Large ribosomal subunit protein uL6 from Shewanella pealeana (strain ATCC 700345 / ANG-SQ1).